Consider the following 1396-residue polypeptide: DNA-directed RNA polymerase subunit beta' (1396 aa).

Zn(2+) contacts are provided by cysteine 70, cysteine 72, cysteine 85, and cysteine 88. Mg(2+) contacts are provided by aspartate 460, aspartate 462, and aspartate 464. Residues cysteine 814, cysteine 888, cysteine 895, and cysteine 898 each coordinate Zn(2+).

This sequence belongs to the RNA polymerase beta' chain family. The RNAP catalytic core consists of 2 alpha, 1 beta, 1 beta' and 1 omega subunit. When a sigma factor is associated with the core the holoenzyme is formed, which can initiate transcription. It depends on Mg(2+) as a cofactor. Zn(2+) serves as cofactor.

The catalysed reaction is RNA(n) + a ribonucleoside 5'-triphosphate = RNA(n+1) + diphosphate. Its function is as follows. DNA-dependent RNA polymerase catalyzes the transcription of DNA into RNA using the four ribonucleoside triphosphates as substrates. This is DNA-directed RNA polymerase subunit beta' from Chromobacterium violaceum (strain ATCC 12472 / DSM 30191 / JCM 1249 / CCUG 213 / NBRC 12614 / NCIMB 9131 / NCTC 9757 / MK).